The chain runs to 712 residues: Sesterterpene synthase btcA (712 aa).

Residues 1–332 are terpene cyclase; the sequence is MTTIWEHCVD…CANCPRHHAW (332 aa). Asp-96 contacts Mg(2+). Substrate-binding positions include Asp-96, Asn-234, 238–242, and 328–329; these read SWDRE and RH. The DDXXD 1 signature appears at 96–100; sequence DDLCD. An NSE/DTE motif is present at residues 234 to 242; that stretch reads NDYWSWDRE. The interval 333 to 706 is prenyltransferase; that stretch reads RDEESSPSER…VMRIVLSRLS (374 aa). Positions 334–373 are disordered; sequence DEESSPSERSFSPSNEGIEDPRLSPGASTTSSMSQKSSPA. 2 stretches are compositionally biased toward low complexity: residues 340-349 and 361-373; these read SERSFSPSNE and STTS…SSPA. The isopentenyl diphosphate site is built by Lys-414, Arg-417, and His-446. Mg(2+) contacts are provided by Asp-453 and Asp-457. A DDXXD 2 motif is present at residues 453–457; it reads DDIED. Dimethylallyl diphosphate is bound at residue Arg-462. Arg-463 contacts isopentenyl diphosphate. Residues Lys-540, Thr-541, Gln-580, Asn-587, Lys-597, and Lys-607 each contribute to the dimethylallyl diphosphate site.

This sequence in the N-terminal section; belongs to the terpene synthase family. The protein in the C-terminal section; belongs to the FPP/GGPP synthase family. As to quaternary structure, hexamer. Requires Mg(2+) as cofactor.

It carries out the reaction isopentenyl diphosphate + (2E,6E)-farnesyl diphosphate = (2E,6E,10E)-geranylgeranyl diphosphate + diphosphate. It catalyses the reaction isopentenyl diphosphate + (2E,6E,10E)-geranylgeranyl diphosphate = (2E,6E,10E,14E)-geranylfarnesyl diphosphate + diphosphate. Its pathway is secondary metabolite biosynthesis; terpenoid biosynthesis. Its function is as follows. Bifunctional terpene synthase; part of the gene cluster that mediates the biosynthesis of betaestacins. The bifunctional terpene synthase btcA converts isopentenyl diphosphate (IPP) and dimethylallyl diphosphate (DMAPP) into the sesterterpene betaestacin I. The C-terminal prenyltransferase (PT) domain of btcA catalyzes formation of GFPP, whereas the N-terminal terpene cyclase (TC) domain catalyzes the cyclization of GFPP into betaestacin I. The cytochrome P450 monooxygenase btcB oxidizes the C25 methyl group of betaestacin I to yield the carboxylic acid betaestacin IV via the alcohol betaestacin III. The cytochrome P450 monooxygenase btcC further catalyzes the multistep oxidation of betaestacin IV to produce several compounds, including betaestacins Va, Vb, Vc and VI. The protein is Sesterterpene synthase btcA of Colletotrichum orbiculare (strain 104-T / ATCC 96160 / CBS 514.97 / LARS 414 / MAFF 240422) (Cucumber anthracnose fungus).